Reading from the N-terminus, the 133-residue chain is Carbohydrate-binding protein AWN (133 aa).

Ala-1 carries the post-translational modification N-acetylalanine. Cystine bridges form between Cys-9–Cys-30 and Cys-53–Cys-74. The CUB domain maps to 9–110 (CGGVLRDPPG…SPFHIYYYAD (102 aa)). The interval 73 to 110 (ICGGISLVFRSSSNIATIKYLRTSGQRASPFHIYYYAD) is heparin-binding.

The protein belongs to the spermadhesin family.

The protein resides in the secreted. In terms of biological role, mediates the binding of spermatozoa to component(s) of the egg's zona pellucida by a carbohydrate-binding mechanism. It is a secretory component of the male accessory glands being coated to the sperm surface at the time of ejaculation. In Equus caballus (Horse), this protein is Carbohydrate-binding protein AWN.